Reading from the N-terminus, the 104-residue chain is Large ribosomal subunit protein bL21 (104 aa).

This sequence belongs to the bacterial ribosomal protein bL21 family. Part of the 50S ribosomal subunit. Contacts protein L20.

This protein binds to 23S rRNA in the presence of protein L20. This is Large ribosomal subunit protein bL21 from Clostridium botulinum (strain ATCC 19397 / Type A).